A 130-amino-acid chain; its full sequence is Mitochondrial pyruvate carrier 1 (130 aa).

2 consecutive transmembrane segments (helical) span residues 23-45 (LKYIFTTHFWGPVSNFGIPIAAI) and 55-77 (ISGPMTFALVTYSGVFMKYALSV).

This sequence belongs to the mitochondrial pyruvate carrier (MPC) (TC 2.A.105) family. The functional 150 kDa pyruvate import complex is a heteromer of MPC1 and either MPC2 or MPC3.

The protein resides in the mitochondrion. The protein localises to the mitochondrion inner membrane. Functionally, mediates the uptake of pyruvate into mitochondria. This is Mitochondrial pyruvate carrier 1 from Saccharomyces cerevisiae (strain ATCC 204508 / S288c) (Baker's yeast).